A 329-amino-acid chain; its full sequence is 4-hydroxythreonine-4-phosphate dehydrogenase (329 aa).

Substrate contacts are provided by His136 and Thr137. 3 residues coordinate a divalent metal cation: His166, His211, and His266. Positions 274, 283, and 292 each coordinate substrate.

It belongs to the PdxA family. As to quaternary structure, homodimer. Requires Zn(2+) as cofactor. Mg(2+) serves as cofactor. It depends on Co(2+) as a cofactor.

The protein localises to the cytoplasm. The enzyme catalyses 4-(phosphooxy)-L-threonine + NAD(+) = 3-amino-2-oxopropyl phosphate + CO2 + NADH. It functions in the pathway cofactor biosynthesis; pyridoxine 5'-phosphate biosynthesis; pyridoxine 5'-phosphate from D-erythrose 4-phosphate: step 4/5. In terms of biological role, catalyzes the NAD(P)-dependent oxidation of 4-(phosphooxy)-L-threonine (HTP) into 2-amino-3-oxo-4-(phosphooxy)butyric acid which spontaneously decarboxylates to form 3-amino-2-oxopropyl phosphate (AHAP). The protein is 4-hydroxythreonine-4-phosphate dehydrogenase of Escherichia coli O139:H28 (strain E24377A / ETEC).